Reading from the N-terminus, the 716-residue chain is MDKMNPPALGQASALFPDLEPPGGVGKATVLLGGSTGLTSSDMEFQKMLIDERMRCENHKTNYQTLKVEHTRLQDQYTRAQNELKRLLSDRQVTQEKQQLLLAELRGELLDKTRDLEELKLQVLTPQRLELLRAQVQQELEAPIRERFNKLQEEAENYRSEYNKLRYDLTFLKSEFDHQKEEHARVLEERRIRHEADVARLEHDKEDLATQLQSGDPARDGKRVEALLREKAQLHQRLRGLEAEVTELRAERNNSGAQAENVQRIQIRQLAESQAAVKALEAEKQSIRMQLDRTESELRLSQEQNTLLTGKLHKAEREINSLNSQVEEMKHTHKLELSNVKLECVRSKGELERERDMLQCQVEGLQSDIEVMKSALERNKELISEKEREMVRRVQAAREEEIHKMATLQEEKLELENRLSELEQQKALQEVTGNSQKEEWEERLRAAQLGEESVRKELQNLRTKVQQQGQQLEELETLKAENADLRQQIAELNLQVGTLSHSESELLDTNNRLRESLERVREDLRSARTQMERTQQEAERLVEERRVEWLEEKHKLQDIEAELREKYSQAKERLQRAAFAQKKRKTMTELKENKLKDKIQLLEAKIAELEIEAKHAQLSKRLRELQRRHNEFRRLLLGNQMTSSTPLAQSLLIPNESIFSNIQVSEEQHQRELCVLRRRLEELENSQQQQLEELAAPLDRDRERLSSPRDALPDLS.

The interval 1–20 (MDKMNPPALGQASALFPDLE) is disordered. Residues 55 to 638 (RCENHKTNYQ…HNEFRRLLLG (584 aa)) are a coiled coil. The segment at 691–716 (LEELAAPLDRDRERLSSPRDALPDLS) is disordered. Residues 698–707 (LDRDRERLSS) are compositionally biased toward basic and acidic residues.

It belongs to the CEP83 family.

It localises to the cytoplasm. Its subcellular location is the cytoskeleton. The protein resides in the microtubule organizing center. It is found in the centrosome. The protein localises to the centriole. Its function is as follows. Component of the distal appendage region of the centriole involved in the initiation of primary cilium assembly. The polypeptide is Centrosomal protein of 83 kDa (cep83) (Danio rerio (Zebrafish)).